Consider the following 271-residue polypeptide: 4-hydroxy-tetrahydrodipicolinate reductase (271 aa).

NAD(+) is bound by residues 10-15 (GAGGRM), E36, 100-102 (GTT), and 124-127 (SGNM). The Proton donor/acceptor role is filled by H157. A (S)-2,3,4,5-tetrahydrodipicolinate-binding site is contributed by H158. Catalysis depends on K161, which acts as the Proton donor. 167-168 (GT) is a (S)-2,3,4,5-tetrahydrodipicolinate binding site.

The protein belongs to the DapB family.

It is found in the cytoplasm. The catalysed reaction is (S)-2,3,4,5-tetrahydrodipicolinate + NAD(+) + H2O = (2S,4S)-4-hydroxy-2,3,4,5-tetrahydrodipicolinate + NADH + H(+). The enzyme catalyses (S)-2,3,4,5-tetrahydrodipicolinate + NADP(+) + H2O = (2S,4S)-4-hydroxy-2,3,4,5-tetrahydrodipicolinate + NADPH + H(+). It participates in amino-acid biosynthesis; L-lysine biosynthesis via DAP pathway; (S)-tetrahydrodipicolinate from L-aspartate: step 4/4. In terms of biological role, catalyzes the conversion of 4-hydroxy-tetrahydrodipicolinate (HTPA) to tetrahydrodipicolinate. The polypeptide is 4-hydroxy-tetrahydrodipicolinate reductase (Bradyrhizobium diazoefficiens (strain JCM 10833 / BCRC 13528 / IAM 13628 / NBRC 14792 / USDA 110)).